The sequence spans 336 residues: 3-isopropylmalate dehydrogenase (336 aa).

Substrate-binding residues include Arg87, Arg97, Arg121, and Asp211. 3 residues coordinate Mg(2+): Asp211, Asp235, and Asp239. Position 271-283 (Gly271–Asp283) interacts with NAD(+).

The protein belongs to the isocitrate and isopropylmalate dehydrogenases family. LeuB type 2 subfamily. As to quaternary structure, homodimer. Mg(2+) is required as a cofactor. Mn(2+) serves as cofactor.

The protein localises to the cytoplasm. The catalysed reaction is (2R,3S)-3-isopropylmalate + NAD(+) = 4-methyl-2-oxopentanoate + CO2 + NADH. It participates in amino-acid biosynthesis; L-leucine biosynthesis; L-leucine from 3-methyl-2-oxobutanoate: step 3/4. Functionally, catalyzes the oxidation of 3-carboxy-2-hydroxy-4-methylpentanoate (3-isopropylmalate) to 3-carboxy-4-methyl-2-oxopentanoate. The product decarboxylates to 4-methyl-2 oxopentanoate. The sequence is that of 3-isopropylmalate dehydrogenase (leuB) from Mycobacterium tuberculosis (strain CDC 1551 / Oshkosh).